Consider the following 132-residue polypeptide: Ribosome-binding factor A (132 aa).

This sequence belongs to the RbfA family. In terms of assembly, monomer. Binds 30S ribosomal subunits, but not 50S ribosomal subunits or 70S ribosomes.

Its subcellular location is the cytoplasm. Functionally, one of several proteins that assist in the late maturation steps of the functional core of the 30S ribosomal subunit. Associates with free 30S ribosomal subunits (but not with 30S subunits that are part of 70S ribosomes or polysomes). Required for efficient processing of 16S rRNA. May interact with the 5'-terminal helix region of 16S rRNA. This is Ribosome-binding factor A from Pseudomonas entomophila (strain L48).